A 301-amino-acid chain; its full sequence is DNA repair protein RecO (301 aa).

Residues 272 to 301 form a disordered region; the sequence is PTPSGQGSPVAAAAFSEEDSETLGSNLKKL.

Belongs to the RecO family.

In terms of biological role, involved in DNA repair and RecF pathway recombination. The sequence is that of DNA repair protein RecO from Synechococcus sp. (strain JA-3-3Ab) (Cyanobacteria bacterium Yellowstone A-Prime).